Reading from the N-terminus, the 313-residue chain is MVFFPHRHLLGIKGLSHQDITLLLDKADEAVKISRQREKKTSTLRGLTQINLFFEASTRTQSSFELAGKRLGADVMNMSVGNSSVKKGETLIDTAMTLNAMRPDVLVVRHSSAGAAALLAQKVACSVVNAGDGQHEHPTQALLDALTIRRAKGELSGITVAICGDVLHSRVARSNIILLNQMGARVRVVAPATLLPSGIRDMSVEVFNDMKEGLKNADVVMMLRLQRERMSGSFVPSVREYFHYYGLDAEKLKAAKEDALVMHPGPMNRGVEIASEVADGPQSVIESQVEMGVAVRMAVMETLLVSQNQGERV.

Positions 59 and 60 each coordinate carbamoyl phosphate. Lysine 87 contributes to the L-aspartate binding site. 3 residues coordinate carbamoyl phosphate: arginine 109, histidine 137, and glutamine 140. L-aspartate is bound by residues arginine 170 and arginine 224. Residues glycine 265 and proline 266 each contribute to the carbamoyl phosphate site.

This sequence belongs to the aspartate/ornithine carbamoyltransferase superfamily. ATCase family. As to quaternary structure, heterododecamer (2C3:3R2) of six catalytic PyrB chains organized as two trimers (C3), and six regulatory PyrI chains organized as three dimers (R2).

It catalyses the reaction carbamoyl phosphate + L-aspartate = N-carbamoyl-L-aspartate + phosphate + H(+). It functions in the pathway pyrimidine metabolism; UMP biosynthesis via de novo pathway; (S)-dihydroorotate from bicarbonate: step 2/3. In terms of biological role, catalyzes the condensation of carbamoyl phosphate and aspartate to form carbamoyl aspartate and inorganic phosphate, the committed step in the de novo pyrimidine nucleotide biosynthesis pathway. The polypeptide is Aspartate carbamoyltransferase catalytic subunit (Agrobacterium fabrum (strain C58 / ATCC 33970) (Agrobacterium tumefaciens (strain C58))).